Reading from the N-terminus, the 349-residue chain is tRNA pseudouridine synthase D (349 aa).

F27 is a substrate binding site. D80 (nucleophile) is an active-site residue. Substrate is bound at residue N129. Residues 155–303 (GVPNYFGAQR…VEAARRAMLL (149 aa)) enclose the TRUD domain. F329 contributes to the substrate binding site.

It belongs to the pseudouridine synthase TruD family.

It catalyses the reaction uridine(13) in tRNA = pseudouridine(13) in tRNA. Its function is as follows. Responsible for synthesis of pseudouridine from uracil-13 in transfer RNAs. The sequence is that of tRNA pseudouridine synthase D from Shigella flexneri.